Here is a 260-residue protein sequence, read N- to C-terminus: 33 kDa inner dynein arm light chain, axonemal (260 aa).

Residues 1 to 66 are disordered; that stretch reads MIPPNASLVK…PVESQKAQQT (66 aa). The stretch at 177–260 forms a coiled coil; that stretch reads MRKALQAEQG…LEGIIAPNKK (84 aa).

Belongs to the inner dynein arm light chain family. In terms of processing, may undergo some post-translational modifications that shift its mobility on SDS gels.

Functionally, may play a dynamic role in flagellar motility. This chain is 33 kDa inner dynein arm light chain, axonemal, found in Strongylocentrotus purpuratus (Purple sea urchin).